The sequence spans 307 residues: Predicted GPI-anchored protein 44 (307 aa).

An N-terminal signal peptide occupies residues 1–22 (MLSTNNLLILLIFSFLITNVKS). N-linked (GlcNAc...) asparagine glycosylation is found at N146 and N217. The interval 232-261 (TPQPLLETPSQESSAPNIDSTTPTTIDNTV) is disordered. The segment covering 239–254 (TPSQESSAPNIDSTTP) has biased composition (polar residues). G286 carries the GPI-anchor amidated glycine lipid modification. The propeptide at 287 to 307 (GAMGYPSISVALGLVFIAYLV) is removed in mature form.

The protein resides in the cell membrane. The chain is Predicted GPI-anchored protein 44 (PGA44) from Candida albicans (strain SC5314 / ATCC MYA-2876) (Yeast).